The following is a 1113-amino-acid chain: Lon protease homolog, mitochondrial (1113 aa).

The N-terminal 61 residues, 1–61 (MLRGQTLPWR…RAFSSSSIRR (61 aa)), are a transit peptide targeting the mitochondrion. A disordered region spans residues 42–196 (SRLHRSLPTS…SGEKALQKPS (155 aa)). Composition is skewed to basic and acidic residues over residues 64–99 (KPPP…RKAA), 124–143 (KAGA…KDGN), and 178–192 (DGGK…EKAL). Positions 204–456 (VMAIPIAKRP…KALVVLKKEL (253 aa)) constitute a Lon N-terminal domain. 609–616 (GPPGVGKT) contributes to the ATP binding site. Basic and acidic residues predominate over residues 828–858 (LTDEGKAVQEESQKETESPDSKSPVDPEKST). The interval 828–864 (LTDEGKAVQEESQKETESPDSKSPVDPEKSTTETPRV) is disordered. Positions 898-1084 (TFPPGVTMGL…SEVFDLLFTD (187 aa)) constitute a Lon proteolytic domain. Residues Ser-990 and Lys-1033 contribute to the active site.

It belongs to the peptidase S16 family. Homohexamer or homoheptamer. Organized in a ring with a central cavity.

It localises to the mitochondrion matrix. It carries out the reaction Hydrolysis of proteins in presence of ATP.. Its function is as follows. ATP-dependent serine protease that mediates the selective degradation of misfolded, unassembled or oxidatively damaged polypeptides as well as certain short-lived regulatory proteins in the mitochondrial matrix. May also have a chaperone function in the assembly of inner membrane protein complexes. Participates in the regulation of mitochondrial gene expression and in the maintenance of the integrity of the mitochondrial genome. Binds to mitochondrial DNA in a site-specific manner. This chain is Lon protease homolog, mitochondrial (pim1), found in Aspergillus niger (strain ATCC MYA-4892 / CBS 513.88 / FGSC A1513).